A 64-amino-acid chain; its full sequence is MMRHLLLVGAAILIFVSDAQAQGDGEDPCQIVRCSYGANCIAYGDTAICECPFGYSGIRCQDPS.

The N-terminal stretch at 1–21 (MMRHLLLVGAAILIFVSDAQA) is a signal peptide. Residue Q22 is modified to Pyrrolidone carboxylic acid. The EGF-like domain maps to 25–61 (GEDPCQIVRCSYGANCIAYGDTAICECPFGYSGIRCQ). Disulfide bonds link C29–C40, C34–C49, and C51–C60.

In terms of tissue distribution, albumen gland. Up-regulated in adult CNS after axotomy.

Its subcellular location is the secreted. Induces neurite outgrowth in specific adult neurons in vitro. This is Epidermal growth factor from Lymnaea stagnalis (Great pond snail).